Reading from the N-terminus, the 510-residue chain is NAD(P)H-quinone oxidoreductase subunit 2 B, chloroplastic (510 aa).

Helical transmembrane passes span 24–44 (LLLF…GLIL), 57–77 (IPWF…ALLF), 99–119 (IFQF…VEYI), 124–144 (MAIT…MFLC), 149–169 (LITI…LSGY), 183–203 (YLLM…WLYG), 227–247 (PGIL…LSLA), 295–315 (WHLL…LIAI), 323–343 (MLAY…IVGD), 354–374 (YMLF…LFGL), 395–415 (ALSL…AGFF), 428–448 (GLYF…YYYL), and 484–504 (MIVC…IIAI).

The protein belongs to the complex I subunit 2 family. As to quaternary structure, NDH is composed of at least 16 different subunits, 5 of which are encoded in the nucleus.

Its subcellular location is the plastid. It localises to the chloroplast thylakoid membrane. The catalysed reaction is a plastoquinone + NADH + (n+1) H(+)(in) = a plastoquinol + NAD(+) + n H(+)(out). It catalyses the reaction a plastoquinone + NADPH + (n+1) H(+)(in) = a plastoquinol + NADP(+) + n H(+)(out). In terms of biological role, NDH shuttles electrons from NAD(P)H:plastoquinone, via FMN and iron-sulfur (Fe-S) centers, to quinones in the photosynthetic chain and possibly in a chloroplast respiratory chain. The immediate electron acceptor for the enzyme in this species is believed to be plastoquinone. Couples the redox reaction to proton translocation, and thus conserves the redox energy in a proton gradient. This chain is NAD(P)H-quinone oxidoreductase subunit 2 B, chloroplastic, found in Eucalyptus globulus subsp. globulus (Tasmanian blue gum).